Consider the following 673-residue polypeptide: DNA ligase (673 aa).

Aspartate 34–aspartate 38 contributes to the NAD(+) binding site. Positions leucine 54–alanine 73 are disordered. NAD(+) is bound by residues serine 83–leucine 84 and glutamate 114. The N6-AMP-lysine intermediate role is filled by lysine 116. Positions 137, 176, 292, and 316 each coordinate NAD(+). The Zn(2+) site is built by cysteine 410, cysteine 413, cysteine 428, and cysteine 433. The BRCT domain occupies proline 594 to glycine 673.

It belongs to the NAD-dependent DNA ligase family. LigA subfamily. Mg(2+) serves as cofactor. The cofactor is Mn(2+).

It catalyses the reaction NAD(+) + (deoxyribonucleotide)n-3'-hydroxyl + 5'-phospho-(deoxyribonucleotide)m = (deoxyribonucleotide)n+m + AMP + beta-nicotinamide D-nucleotide.. DNA ligase that catalyzes the formation of phosphodiester linkages between 5'-phosphoryl and 3'-hydroxyl groups in double-stranded DNA using NAD as a coenzyme and as the energy source for the reaction. It is essential for DNA replication and repair of damaged DNA. The sequence is that of DNA ligase from Symbiobacterium thermophilum (strain DSM 24528 / JCM 14929 / IAM 14863 / T).